Here is a 121-residue protein sequence, read N- to C-terminus: Small ribosomal subunit protein uS11c (121 aa).

The protein belongs to the universal ribosomal protein uS11 family. In terms of assembly, part of the 30S ribosomal subunit.

It is found in the plastid. It localises to the chloroplast. In Cyanidioschyzon merolae (strain NIES-3377 / 10D) (Unicellular red alga), this protein is Small ribosomal subunit protein uS11c.